We begin with the raw amino-acid sequence, 90 residues long: Phosphocarrier protein HPr (90 aa).

The HPr domain maps to 1-89 (MPAREITIIN…ELINNFFDEG (89 aa)). The active-site Pros-phosphohistidine intermediate is the His15.

Belongs to the HPr family.

Its subcellular location is the cytoplasm. In terms of biological role, general (non sugar-specific) component of the phosphoenolpyruvate-dependent sugar phosphotransferase system (sugar PTS). This major carbohydrate active-transport system catalyzes the phosphorylation of incoming sugar substrates concomitantly with their translocation across the cell membrane. The phosphoryl group from phosphoenolpyruvate (PEP) is transferred to the phosphoryl carrier protein HPr by enzyme I. Phospho-HPr then transfers it to the PTS EIIA domain. The protein is Phosphocarrier protein HPr (ptsH) of Pseudomonas putida (Arthrobacter siderocapsulatus).